Consider the following 519-residue polypeptide: T-complex protein 11-like protein 2 (519 aa).

The segment at 1–57 (MPFNGEKQCVSEDQPSDSDSSRFSESMASLSDYECSRQSFTSDSSSKSSSPASTSPP) is disordered. Ser-16 bears the Phosphoserine mark. 2 stretches are compositionally biased toward low complexity: residues 17 to 29 (DSDS…SMAS) and 36 to 55 (SRQS…ASTS).

Belongs to the TCP11 family. Interacts with FMNL2; this interaction promotes muscle-derived satellite cell (MDSC) migration and differentiation.

It localises to the cytoplasm. It is found in the cytoskeleton. Functionally, promotes the migration of muscle-derived satellite cells (MDSCs) during differentiation throught interaction with FMNL2 and therefore may participate in microfilament assembly. The sequence is that of T-complex protein 11-like protein 2 from Bos taurus (Bovine).